A 410-amino-acid chain; its full sequence is BTB and MATH domain-containing protein 42 (410 aa).

Polar residues predominate over residues 1–19 (MSSRSSWSSTEQINRTISS). The disordered stretch occupies residues 1-29 (MSSRSSWSSTEQINRTISSRADDLPPQPR). An MATH domain is found at 45 to 173 (STKLEWKIEQ…DGTLFLICEV (129 aa)). The region spanning 219 to 287 (TDCVIHVGNK…MYTGATESLE (69 aa)) is the BTB domain. Residues 389–410 (TSNIPISVSPPPARKRLRRSAK) are disordered. The span at 401 to 410 (ARKRLRRSAK) shows a compositional bias: basic residues.

As to quaternary structure, interacts with cul-3.

Its pathway is protein modification; protein ubiquitination. In terms of biological role, probable substrate-specific adapter of an E3 ubiquitin-protein ligase complex which mediates the ubiquitination and subsequent proteasomal degradation of target proteins. This Caenorhabditis elegans protein is BTB and MATH domain-containing protein 42 (bath-42).